The primary structure comprises 628 residues: Probable alpha-L-arabinofuranosidase A (628 aa).

The N-terminal stretch at 1–25 (MVAFSTISGLGALSLLFSIIESVDG) is a signal peptide. N-linked (GlcNAc...) asparagine glycans are attached at residues Asn36, Asn51, Asn74, Asn152, Asn164, Asn260, Asn359, Asn404, and Asn493.

This sequence belongs to the glycosyl hydrolase 51 family.

It is found in the secreted. It catalyses the reaction Hydrolysis of terminal non-reducing alpha-L-arabinofuranoside residues in alpha-L-arabinosides.. The protein operates within glycan metabolism; L-arabinan degradation. Alpha-L-arabinofuranosidase involved in the degradation of arabinoxylan, a major component of plant hemicellulose. Acts only on small linear 1,5-alpha-linked L-arabinofuranosyl oligosaccharides. The protein is Probable alpha-L-arabinofuranosidase A (abfA) of Aspergillus terreus (strain NIH 2624 / FGSC A1156).